Reading from the N-terminus, the 309-residue chain is Taste receptor type 2 member 46 (309 aa).

A topological domain (extracellular) is located at residue M1. The helical transmembrane segment at 2-22 (ITFLPIIFSILIVVTFVIGNF) threads the bilayer. Residues 23–46 (ANGFIALANSIEWFKRQKISFADQ) lie on the Cytoplasmic side of the membrane. A helical transmembrane segment spans residues 47-67 (ILTALAVSRVGLLWVLLLNWY). The Extracellular segment spans residues 68–86 (ATELNPAFYSIEVRITAYN). A helical transmembrane segment spans residues 87-107 (VWAVISHFSNWLATSLSIFYL). Over 108–126 (LKIANFSNLIFLRLKRRVK) the chain is Cytoplasmic. A helical membrane pass occupies residues 127 to 147 (SVVLVILLGPLLFLVCHLFVI). At 148 to 178 (NMNQIIWTKEYEGNMTWKIKLRSAMYLSDTT) the chain is on the extracellular side. A glycan (N-linked (GlcNAc...) asparagine) is linked at N161. A helical transmembrane segment spans residues 179-199 (VTILANLVPFTLTLISFLLLI). Residues 200 to 229 (CSLCKHLKKMQLHGKGSQDPSMKVHIKALQ) lie on the Cytoplasmic side of the membrane. Residues 230–250 (TVTSFLLLCAIYFLSVIMSVW) traverse the membrane as a helical segment. The Extracellular portion of the chain corresponds to 251 to 259 (SFESLENKP). The chain crosses the membrane as a helical span at residues 260–280 (VFMFCEAITFSYPSTHPFILI). The Cytoplasmic portion of the chain corresponds to 281 to 309 (WGNKKLKQTFLSVLWHVRYWVKGEKPSSS).

Belongs to the G-protein coupled receptor T2R family.

The protein resides in the membrane. It is found in the cell projection. The protein localises to the cilium membrane. Functionally, receptor that may play a role in the perception of bitterness and is gustducin-linked. May play a role in sensing the chemical composition of the gastrointestinal content. The activity of this receptor may stimulate alpha gustducin, mediate PLC-beta-2 activation and lead to the gating of TRPM5. In airway epithelial cells, binding of bitter compounds increases the intracellular calcium ion concentration and stimulates ciliary beat frequency. The protein is Taste receptor type 2 member 46 (TAS2R46) of Gorilla gorilla gorilla (Western lowland gorilla).